Here is a 375-residue protein sequence, read N- to C-terminus: Tyrosine--tRNA ligase (375 aa).

5 residues coordinate L-tyrosine: Tyr37, Tyr168, Gln172, Asp175, and Gln190. Positions 251–255 match the 'KMSKS' region motif; that stretch reads KMSKS. Lys254 provides a ligand contact to ATP.

Belongs to the class-I aminoacyl-tRNA synthetase family. TyrS type 4 subfamily. Homodimer.

The protein localises to the cytoplasm. The catalysed reaction is tRNA(Tyr) + L-tyrosine + ATP = L-tyrosyl-tRNA(Tyr) + AMP + diphosphate + H(+). Functionally, catalyzes the attachment of tyrosine to tRNA(Tyr) in a two-step reaction: tyrosine is first activated by ATP to form Tyr-AMP and then transferred to the acceptor end of tRNA(Tyr). The sequence is that of Tyrosine--tRNA ligase from Thermococcus gammatolerans (strain DSM 15229 / JCM 11827 / EJ3).